We begin with the raw amino-acid sequence, 189 residues long: Glucose-6-phosphate isomerase (189 aa).

Fe cation contacts are provided by His-88, His-90, Glu-97, and His-136.

The protein belongs to the archaeal-type GPI family. In terms of assembly, homodimer.

The protein localises to the cytoplasm. It catalyses the reaction alpha-D-glucose 6-phosphate = beta-D-fructose 6-phosphate. It participates in carbohydrate degradation; glycolysis; D-glyceraldehyde 3-phosphate and glycerone phosphate from D-glucose: step 2/4. In Thermococcus kodakarensis (strain ATCC BAA-918 / JCM 12380 / KOD1) (Pyrococcus kodakaraensis (strain KOD1)), this protein is Glucose-6-phosphate isomerase.